The sequence spans 113 residues: Histone H3-8 (113 aa).

Residues 1–17 are compositionally biased toward basic residues; the sequence is NTGAKAPRKHLANKAAR. The tract at residues 1 to 31 is disordered; it reads NTGAKAPRKHLANKAARKTAAPANAGIKKPH.

Belongs to the histone H3 family. The nucleosome is a histone octamer containing two molecules each of H2A, H2B, H3 and H4 assembled in one H3-H4 heterotetramer and two H2A-H2B heterodimers. The octamer wraps approximately 147 bp of DNA.

The protein localises to the nucleus. It is found in the chromosome. In terms of biological role, core component of nucleosome. Nucleosomes wrap and compact DNA into chromatin, limiting DNA accessibility to the cellular machineries which require DNA as a template. Histones thereby play a central role in transcription regulation, DNA repair, DNA replication and chromosomal stability. DNA accessibility is regulated via a complex set of post-translational modifications of histones, also called histone code, and nucleosome remodeling. The chain is Histone H3-8 (H3-8) from Stylonychia lemnae (Ciliate).